A 193-amino-acid polypeptide reads, in one-letter code: UPF0301 protein Fphi_1754 (193 aa).

Belongs to the UPF0301 (AlgH) family.

The chain is UPF0301 protein Fphi_1754 from Francisella philomiragia subsp. philomiragia (strain ATCC 25017 / CCUG 19701 / FSC 153 / O#319-036).